The primary structure comprises 821 residues: Palmitoyltransferase AKR1 (821 aa).

The tract at residues 1–118 is disordered; it reads MVDKDANNEL…KDTASRKSMD (118 aa). Over 1–400 the chain is Cytoplasmic; sequence MVDKDANNEL…TIYLNPKIGK (400 aa). Residues 93 to 117 show a composition bias toward basic and acidic residues; the sequence is IQDESVNDKTSEPDENKDTASRKSM. 6 ANK repeats span residues 142–172, 176–205, 213–243, 247–277, 289–318, and 322–351; these read PSLH…KAND, DGIT…SKAD, LKAS…DPTL, QSYN…STST, CDRT…DVSK, and NLFI…NIFA. A helical transmembrane segment spans residues 401-421; it reads LVTFFTPYIILPIMFQVCSFY. A topological domain (lumenal) is located at residue Asn-422. The chain crosses the membrane as a helical span at residues 423–443; it reads GFVIPKLFFSVVLFAGSIYIL. At 444-463 the chain is on the cytoplasmic side; that stretch reads QKLVIPTYLAEEKAIPKSPL. A helical membrane pass occupies residues 464–484; that stretch reads LAGIFSGTAFWCIVTWAFNII. Residues 485 to 494 are Lumenal-facing; sequence PTLLFKKFIS. The helical transmembrane segment at 495–515 threads the bilayer; sequence NLVLSAFIYLFVWSFFKAMFI. Residues 516 to 589 are Cytoplasmic-facing; that stretch reads NPGYVPVPSD…YNDIGVRNHK (74 aa). Residues 546–596 form the DHHC domain; sequence NFCVNTFVRKPLRSKYSRFNKKLIARFDHYCPWVYNDIGVRNHKLFVVFVY. Residue Cys-576 is the S-palmitoyl cysteine intermediate of the active site. Residues 590 to 610 form a helical membrane-spanning segment; that stretch reads LFVVFVYSLNLAVLLFTHLSI. Residues 611-650 are Lumenal-facing; that stretch reads KLFKNTEKMSGYDSDDESQKCWLLSDELCVGYKSHHFQFN. The chain crosses the membrane as a helical span at residues 651–671; sequence LMLWCLIQYIWIAFLCLVQTF. Residues 672 to 821 lie on the Cytoplasmic side of the membrane; that stretch reads QILKGLTTWE…YPPKLADVDA (150 aa).

It belongs to the DHHC palmitoyltransferase family. AKR/ZDHHC17 subfamily.

The protein localises to the early endosome membrane. It is found in the golgi apparatus membrane. The catalysed reaction is L-cysteinyl-[protein] + hexadecanoyl-CoA = S-hexadecanoyl-L-cysteinyl-[protein] + CoA. In terms of biological role, palmitoyltransferase specific for casein kinase 1. The polypeptide is Palmitoyltransferase AKR1 (AKR1) (Debaryomyces hansenii (strain ATCC 36239 / CBS 767 / BCRC 21394 / JCM 1990 / NBRC 0083 / IGC 2968) (Yeast)).